A 483-amino-acid chain; its full sequence is 6-phosphogluconate dehydrogenase, decarboxylating 1 (483 aa).

Residues 11–16 (GLAVMG), 34–36 (NRT), 78–80 (VKA), and Asn106 contribute to the NADP(+) site. Residues Asn106 and 132–134 (SGG) contribute to the substrate site. Residue Lys186 is the Proton acceptor of the active site. 189-190 (HN) contacts substrate. The active-site Proton donor is the Glu193. Substrate contacts are provided by Tyr194, Lys264, Arg291, Arg454, and His460.

This sequence belongs to the 6-phosphogluconate dehydrogenase family. In terms of assembly, homodimer.

It localises to the cytoplasm. It catalyses the reaction 6-phospho-D-gluconate + NADP(+) = D-ribulose 5-phosphate + CO2 + NADPH. The protein operates within carbohydrate degradation; pentose phosphate pathway; D-ribulose 5-phosphate from D-glucose 6-phosphate (oxidative stage): step 3/3. Its function is as follows. Catalyzes the oxidative decarboxylation of 6-phosphogluconate to ribulose 5-phosphate and CO(2), with concomitant reduction of NADP to NADPH. This Spinacia oleracea (Spinach) protein is 6-phosphogluconate dehydrogenase, decarboxylating 1 (pgdC).